A 408-amino-acid polypeptide reads, in one-letter code: Imidazolonepropionase (408 aa).

His-74 and His-76 together coordinate Fe(3+). Zn(2+) contacts are provided by His-74 and His-76. 4-imidazolone-5-propanoate contacts are provided by Arg-83, Tyr-146, and His-179. Tyr-146 is a binding site for N-formimidoyl-L-glutamate. His-244 contributes to the Fe(3+) binding site. His-244 lines the Zn(2+) pocket. A 4-imidazolone-5-propanoate-binding site is contributed by Gln-247. Asp-319 provides a ligand contact to Fe(3+). Asp-319 serves as a coordination point for Zn(2+). Positions 321 and 323 each coordinate N-formimidoyl-L-glutamate. Thr-324 contacts 4-imidazolone-5-propanoate.

It belongs to the metallo-dependent hydrolases superfamily. HutI family. Zn(2+) is required as a cofactor. Requires Fe(3+) as cofactor.

It is found in the cytoplasm. It carries out the reaction 4-imidazolone-5-propanoate + H2O = N-formimidoyl-L-glutamate. The protein operates within amino-acid degradation; L-histidine degradation into L-glutamate; N-formimidoyl-L-glutamate from L-histidine: step 3/3. In terms of biological role, catalyzes the hydrolytic cleavage of the carbon-nitrogen bond in imidazolone-5-propanoate to yield N-formimidoyl-L-glutamate. It is the third step in the universal histidine degradation pathway. The protein is Imidazolonepropionase of Ralstonia nicotianae (strain ATCC BAA-1114 / GMI1000) (Ralstonia solanacearum).